We begin with the raw amino-acid sequence, 75 residues long: SPbeta prophage-derived uncharacterized protein YomT (75 aa).

The sequence is that of SPbeta prophage-derived uncharacterized protein YomT (yomT) from Bacillus subtilis (strain 168).